A 176-amino-acid chain; its full sequence is NAD(P)H-quinone oxidoreductase subunit 6, chloroplastic (176 aa).

Helical transmembrane passes span 10 to 30, 33 to 53, 61 to 81, 92 to 112, and 152 to 172; these read FLLV…VLLP, IFSA…YILA, AQLL…VMFM, LWTV…FSLI, and FFLP…GAIS.

This sequence belongs to the complex I subunit 6 family. In terms of assembly, NDH is composed of at least 16 different subunits, 5 of which are encoded in the nucleus.

It localises to the plastid. Its subcellular location is the chloroplast thylakoid membrane. It catalyses the reaction a plastoquinone + NADH + (n+1) H(+)(in) = a plastoquinol + NAD(+) + n H(+)(out). The catalysed reaction is a plastoquinone + NADPH + (n+1) H(+)(in) = a plastoquinol + NADP(+) + n H(+)(out). Functionally, NDH shuttles electrons from NAD(P)H:plastoquinone, via FMN and iron-sulfur (Fe-S) centers, to quinones in the photosynthetic chain and possibly in a chloroplast respiratory chain. The immediate electron acceptor for the enzyme in this species is believed to be plastoquinone. Couples the redox reaction to proton translocation, and thus conserves the redox energy in a proton gradient. The protein is NAD(P)H-quinone oxidoreductase subunit 6, chloroplastic (ndhG) of Arabis hirsuta (Hairy rock-cress).